The sequence spans 797 residues: Mitochondrial inner membrane m-AAA protease component AFG3L2 (797 aa).

A mitochondrion-targeting transit peptide spans 1 to 38 (MAHRCLRLWGRGGCWPRGLQQLLVPGGVGPGEQPCLRT). Residues 39 to 66 (LYRFVTTQARASRNSLLTDIIAAYQRFC) constitute a propeptide, removed in mature form. Topologically, residues 39–142 (LYRFVTTQAR…KGDIPWDDKD (104 aa)) are mitochondrial matrix. The interval 76-126 (YFPNGKNGKKASEPKEVMGEKKESKPAATTRSSGGGGGGGGKRGGKKDDSH) is disordered. Basic and acidic residues predominate over residues 85–100 (KASEPKEVMGEKKESK). Positions 108-117 (SGGGGGGGGK) are enriched in gly residues. The residue at position 117 (K117) is an N6-succinyllysine. The helical transmembrane segment at 143 to 163 (FRMFFLWTALFWGGVMFYLLL) threads the bilayer. Residues 164–250 (KRSGREITWK…VPVVYIAESD (87 aa)) are Mitochondrial intermembrane-facing. A helical transmembrane segment spans residues 251 to 271 (GSFLLSMLPTVLIIAFLLYTI). Topologically, residues 272–797 (RRGPAGIGRT…EEPPGEKVAN (526 aa)) are mitochondrial matrix. Residues V310, A311, T352, G353, K354, T355, L356, and H490 each contribute to the ATP site. H574 is a Zn(2+) binding site. Residue E575 is part of the active site. H578 and D649 together coordinate Zn(2+). A disordered region spans residues 759-797 (FVEGTGSLDEDTSLPEGLKDWNKEREKEKEEPPGEKVAN). Residues 775–797 (GLKDWNKEREKEKEEPPGEKVAN) are compositionally biased toward basic and acidic residues.

It in the N-terminal section; belongs to the AAA ATPase family. The protein in the C-terminal section; belongs to the peptidase M41 family. In terms of assembly, homohexamer. Forms heterohexamers with SPG7. The m-AAA protease is either composed of homohexamers of AFG3L2 or heterohexamers of AFG3L2 and SPG7. Interacts with MAIP1. Interacts with DNAJC19. Interacts with PHB2. Zn(2+) serves as cofactor. In terms of processing, upon import into the mitochondrion, the N-terminal transit peptide is cleaved to generate an intermediate form which undergoes autocatalytic proteolytic processing to generate the proteolytically active mature form. In terms of tissue distribution, ubiquitous. Highly expressed in the cerebellar Purkinje cells.

It is found in the mitochondrion inner membrane. The catalysed reaction is ATP + H2O = ADP + phosphate + H(+). Functionally, catalytic component of the m-AAA protease, a protease that plays a key role in proteostasis of inner mitochondrial membrane proteins, and which is essential for axonal and neuron development. AFG3L2 possesses both ATPase and protease activities: the ATPase activity is required to unfold substrates, threading them into the internal proteolytic cavity for hydrolysis into small peptide fragments. The m-AAA protease carries out quality control in the inner membrane of the mitochondria by mediating degradation of mistranslated or misfolded polypeptides. The m-AAA protease complex also promotes the processing and maturation of mitochondrial proteins, such as MRPL32/bL32m, PINK1 and SP7. Mediates protein maturation of the mitochondrial ribosomal subunit MRPL32/bL32m by catalyzing the cleavage of the presequence of MRPL32/bL32m prior to assembly into the mitochondrial ribosome. Required for SPG7 maturation into its active mature form after SPG7 cleavage by mitochondrial-processing peptidase (MPP). Required for the maturation of PINK1 into its 52kDa mature form after its cleavage by mitochondrial-processing peptidase (MPP). Acts as a regulator of calcium in neurons by mediating degradation of SMDT1/EMRE before its assembly with the uniporter complex, limiting the availability of SMDT1/EMRE for MCU assembly and promoting efficient assembly of gatekeeper subunits with MCU. Promotes the proteolytic degradation of GHITM upon hyperpolarization of mitochondria: progressive GHITM degradation leads to respiratory complex I degradation and broad reshaping of the mitochondrial proteome by AFG3L2. Also acts as a regulator of mitochondrial glutathione homeostasis by mediating cleavage and degradation of SLC25A39. SLC25A39 cleavage is prevented when SLC25A39 binds iron-sulfur. Involved in the regulation of OMA1-dependent processing of OPA1. May act by mediating processing of OMA1 precursor, participating in OMA1 maturation. This Homo sapiens (Human) protein is Mitochondrial inner membrane m-AAA protease component AFG3L2.